Here is a 617-residue protein sequence, read N- to C-terminus: DNA mismatch repair protein MutL (617 aa).

The protein belongs to the DNA mismatch repair MutL/HexB family.

This protein is involved in the repair of mismatches in DNA. It is required for dam-dependent methyl-directed DNA mismatch repair. May act as a 'molecular matchmaker', a protein that promotes the formation of a stable complex between two or more DNA-binding proteins in an ATP-dependent manner without itself being part of a final effector complex. This chain is DNA mismatch repair protein MutL, found in Christiangramia forsetii (strain DSM 17595 / CGMCC 1.15422 / KT0803) (Gramella forsetii).